The sequence spans 88 residues: Small ribosomal subunit protein uS17 (88 aa).

This sequence belongs to the universal ribosomal protein uS17 family. In terms of assembly, part of the 30S ribosomal subunit.

Its function is as follows. One of the primary rRNA binding proteins, it binds specifically to the 5'-end of 16S ribosomal RNA. The chain is Small ribosomal subunit protein uS17 from Nitratidesulfovibrio vulgaris (strain DSM 19637 / Miyazaki F) (Desulfovibrio vulgaris).